The following is a 338-amino-acid chain: 1-aminocyclopropane-1-carboxylate deaminase (338 aa).

Lys51 is subject to N6-(pyridoxal phosphate)lysine. Catalysis depends on Ser78, which acts as the Nucleophile.

It belongs to the ACC deaminase/D-cysteine desulfhydrase family. As to quaternary structure, homotrimer. It depends on pyridoxal 5'-phosphate as a cofactor.

The enzyme catalyses 1-aminocyclopropane-1-carboxylate + H2O = 2-oxobutanoate + NH4(+). Its function is as follows. Catalyzes a cyclopropane ring-opening reaction, the irreversible conversion of 1-aminocyclopropane-1-carboxylate (ACC) to ammonia and alpha-ketobutyrate. Allows growth on ACC as a nitrogen source. The protein is 1-aminocyclopropane-1-carboxylate deaminase of Burkholderia ambifaria (strain MC40-6).